A 283-amino-acid polypeptide reads, in one-letter code: Elongation factor Ts (283 aa).

Residues 80 to 83 form an involved in Mg(2+) ion dislocation from EF-Tu region; the sequence is TDFV.

The protein belongs to the EF-Ts family.

Its subcellular location is the cytoplasm. Associates with the EF-Tu.GDP complex and induces the exchange of GDP to GTP. It remains bound to the aminoacyl-tRNA.EF-Tu.GTP complex up to the GTP hydrolysis stage on the ribosome. The chain is Elongation factor Ts from Haemophilus influenzae (strain 86-028NP).